Reading from the N-terminus, the 567-residue chain is Probable diguanylate cyclase DgcQ (567 aa).

2 helical membrane passes run 20 to 40 (FGPGHVVNTCFLIVMLFSTLL) and 357 to 377 (IALTLLWGLFTAMLLISWGVI). The GGDEF domain occupies 425-560 (QPFSVIQLDL…GRNRICASDA (136 aa)). Aspartate 433 lines the Mg(2+) pocket. Positions 441, 446, and 450 each coordinate substrate. A Mg(2+)-binding site is contributed by glutamate 476. Glutamate 476 functions as the Proton acceptor in the catalytic mechanism.

Homodimer. It depends on Mg(2+) as a cofactor.

It is found in the cell inner membrane. The enzyme catalyses 2 GTP = 3',3'-c-di-GMP + 2 diphosphate. It functions in the pathway glycan metabolism; bacterial cellulose biosynthesis. Its pathway is purine metabolism; 3',5'-cyclic di-GMP biosynthesis. Catalyzes the synthesis of cyclic-di-GMP (c-di-GMP) via the condensation of 2 GTP molecules. Cyclic-di-GMP is a second messenger which controls cell surface-associated traits in bacteria. Involved in the regulation of cellulose production. This chain is Probable diguanylate cyclase DgcQ, found in Salmonella typhi.